Here is a 788-residue protein sequence, read N- to C-terminus: Endonuclease MutS2 (788 aa).

332–339 contributes to the ATP binding site; it reads GPNTGGKT. Residues 713 to 788 enclose the Smr domain; the sequence is VDLRGMDAEE…GTGVTVVELK (76 aa).

Belongs to the DNA mismatch repair MutS family. MutS2 subfamily. Homodimer. Binds to stalled ribosomes, contacting rRNA.

Its function is as follows. Endonuclease that is involved in the suppression of homologous recombination and thus may have a key role in the control of bacterial genetic diversity. In terms of biological role, acts as a ribosome collision sensor, splitting the ribosome into its 2 subunits. Detects stalled/collided 70S ribosomes which it binds and splits by an ATP-hydrolysis driven conformational change. Acts upstream of the ribosome quality control system (RQC), a ribosome-associated complex that mediates the extraction of incompletely synthesized nascent chains from stalled ribosomes and their subsequent degradation. Probably generates substrates for RQC. This is Endonuclease MutS2 from Clostridium botulinum (strain Okra / Type B1).